Consider the following 262-residue polypeptide: Eukaryotic translation initiation factor 3 subunit G (262 aa).

The region spanning 182 to 260 is the RRM domain; sequence NTCRVTNLPQ…MVLKVEWTRP (79 aa).

It belongs to the eIF-3 subunit G family. As to quaternary structure, component of the eukaryotic translation initiation factor 3 (eIF-3) complex.

It is found in the cytoplasm. RNA-binding component of the eukaryotic translation initiation factor 3 (eIF-3) complex, which is involved in protein synthesis of a specialized repertoire of mRNAs and, together with other initiation factors, stimulates binding of mRNA and methionyl-tRNAi to the 40S ribosome. The eIF-3 complex specifically targets and initiates translation of a subset of mRNAs involved in cell proliferation. This subunit can bind 18S rRNA. Binds to GC-rich 5'UTRs in cholinergic motor neurons, thereby may play a role in translational regulation of mRNAs involved in neuropeptide signaling and stress response, including hlh-30 isoform d and ncs-2. This Caenorhabditis elegans protein is Eukaryotic translation initiation factor 3 subunit G.